A 379-amino-acid chain; its full sequence is Retron Se72 reverse transcriptase (379 aa).

Residues 1–245 (MNKPRFNGTP…SKLSVTGLWV (245 aa)) form the Reverse transcriptase domain. 3 residues coordinate Mg(2+): aspartate 109, aspartate 188, and aspartate 189.

It belongs to the bacterial reverse transcriptase family.

It catalyses the reaction DNA(n) + a 2'-deoxyribonucleoside 5'-triphosphate = DNA(n+1) + diphosphate. In terms of biological role, reverse transcriptase (RT) component of antiviral defense system retron Se72, composed of a non-coding RNA (ncRNA), this reverse transcriptase (RT) and the following cold shock-like protein. Expression of retron Se72 confers protection against bacteriophage lambda. At multiplicity of infection (MOI) of 0.02 cultures slow growth when infected with lambda but do not collapse, at MOI 2 cultures enter growth stasis. Responsible for synthesis of msDNA (a branched molecule with RNA linked by a 2',5'-phosphodiester bond to ssDNA). The retron transcript serves as primer (from a conserved internal G residue) and template for the reaction, and codes for the RT. The DNA segment is predicted to be 72 bases long. In Salmonella heidelberg (strain 579083-10), this protein is Retron Se72 reverse transcriptase.